Reading from the N-terminus, the 148-residue chain is Endoribonuclease YbeY (148 aa).

Residues histidine 113, histidine 117, and histidine 123 each coordinate Zn(2+).

This sequence belongs to the endoribonuclease YbeY family. Requires Zn(2+) as cofactor.

The protein localises to the cytoplasm. Single strand-specific metallo-endoribonuclease involved in late-stage 70S ribosome quality control and in maturation of the 3' terminus of the 16S rRNA. The sequence is that of Endoribonuclease YbeY from Borrelia turicatae (strain 91E135).